Reading from the N-terminus, the 224-residue chain is Deoxyribose-phosphate aldolase (224 aa).

Catalysis depends on aspartate 92, which acts as the Proton donor/acceptor. Lysine 154 acts as the Schiff-base intermediate with acetaldehyde in catalysis. Lysine 183 functions as the Proton donor/acceptor in the catalytic mechanism.

Belongs to the DeoC/FbaB aldolase family. DeoC type 1 subfamily.

The protein resides in the cytoplasm. The catalysed reaction is 2-deoxy-D-ribose 5-phosphate = D-glyceraldehyde 3-phosphate + acetaldehyde. Its pathway is carbohydrate degradation; 2-deoxy-D-ribose 1-phosphate degradation; D-glyceraldehyde 3-phosphate and acetaldehyde from 2-deoxy-alpha-D-ribose 1-phosphate: step 2/2. Its function is as follows. Catalyzes a reversible aldol reaction between acetaldehyde and D-glyceraldehyde 3-phosphate to generate 2-deoxy-D-ribose 5-phosphate. This Mannheimia succiniciproducens (strain KCTC 0769BP / MBEL55E) protein is Deoxyribose-phosphate aldolase.